We begin with the raw amino-acid sequence, 383 residues long: Cytochrome b (383 aa).

4 helical membrane passes run 31–51 (FGSL…FLAM), 75–97 (WLMR…VHIF), 112–132 (LWCS…MGYV), and 178–198 (FFSL…IHLI). Positions 81 and 95 each coordinate heme b. Heme b contacts are provided by histidine 182 and histidine 196. A ubiquinone is bound at residue histidine 201. Transmembrane regions (helical) follow at residues 224-244 (FYTK…IFIF), 288-308 (IGGV…PFTN), 320-340 (IFKV…WVGQ), and 347-367 (YTEI…IIIP).

It belongs to the cytochrome b family. In terms of assembly, fungal cytochrome b-c1 complex contains 10 subunits; 3 respiratory subunits, 2 core proteins and 5 low-molecular weight proteins. Cytochrome b-c1 complex is a homodimer. The cofactor is heme b.

It localises to the mitochondrion inner membrane. Component of the ubiquinol-cytochrome c reductase complex (complex III or cytochrome b-c1 complex) that is part of the mitochondrial respiratory chain. The b-c1 complex mediates electron transfer from ubiquinol to cytochrome c. Contributes to the generation of a proton gradient across the mitochondrial membrane that is then used for ATP synthesis. The polypeptide is Cytochrome b (cob) (Phytophthora megasperma (Potato pink rot fungus)).